We begin with the raw amino-acid sequence, 225 residues long: Redox-sensing transcriptional repressor Rex (225 aa).

The segment at residues 16–55 (IYYRYLNILLDADKKRVSSTELSEAVKVDSATIRRDFSYF) is a DNA-binding region (H-T-H motif). 90–95 (GVGNLG) is a binding site for NAD(+).

The protein belongs to the transcriptional regulatory Rex family. Homodimer.

The protein localises to the cytoplasm. Functionally, modulates transcription in response to changes in cellular NADH/NAD(+) redox state. The protein is Redox-sensing transcriptional repressor Rex of Lactiplantibacillus plantarum (strain ATCC BAA-793 / NCIMB 8826 / WCFS1) (Lactobacillus plantarum).